Reading from the N-terminus, the 527-residue chain is Chorismate synthase (527 aa).

Active-site residues include His17, His104, and Asp485.

Belongs to the chorismate synthase family.

The protein resides in the cytoplasm. It localises to the cytosol. It catalyses the reaction 5-O-(1-carboxyvinyl)-3-phosphoshikimate = chorismate + phosphate. The catalysed reaction is FMNH2 + NADP(+) = FMN + NADPH + 2 H(+). It functions in the pathway metabolic intermediate biosynthesis; chorismate biosynthesis; chorismate from D-erythrose 4-phosphate and phosphoenolpyruvate: step 7/7. Its function is as follows. Bifunctional chorismate synthase and flavin reductase. Catalyzes the conversion of 5-enolpyruvylshikimate 3-phosphate (EPSP) to form chorismate. Acts also as a flavin reductase (FR) able to generate reduced flavin mononucleotide in the presence of NADPH. This chain is Chorismate synthase, found in Plasmodium falciparum (isolate 3D7).